We begin with the raw amino-acid sequence, 217 residues long: Small ribosomal subunit protein uS3 (217 aa).

A KH type-2 domain is found at 38-106 (IRKFLKKRLS…KVTLDIQEVR (69 aa)).

Belongs to the universal ribosomal protein uS3 family. As to quaternary structure, part of the 30S ribosomal subunit. Forms a tight complex with proteins S10 and S14.

In terms of biological role, binds the lower part of the 30S subunit head. Binds mRNA in the 70S ribosome, positioning it for translation. This is Small ribosomal subunit protein uS3 from Desulfotalea psychrophila (strain LSv54 / DSM 12343).